A 505-amino-acid chain; its full sequence is Pleckstrin homology domain-containing family D member 1 (505 aa).

Residues 28-136 (KVQLYGVLWK…WLEMLQESGK (109 aa)) form the PH domain. The stretch at 146–391 (EAMIKSLEAQ…KVRNKEKEER (246 aa)) forms a coiled coil. The disordered stretch occupies residues 264–284 (DKNQPQPLTNQSEQPPASDGL). The span at 267 to 278 (QPQPLTNQSEQP) shows a compositional bias: polar residues. Omega-N-methylarginine is present on Arg502.

The protein belongs to the PLEKHD1 family.

The sequence is that of Pleckstrin homology domain-containing family D member 1 (Plekhd1) from Mus musculus (Mouse).